We begin with the raw amino-acid sequence, 68 residues long: ATP synthase F(0) complex subunit 8 (68 aa).

A helical membrane pass occupies residues 8–24 (TWLITILSMILTLLIVF). The residue at position 54 (Lys-54) is an N6-acetyllysine; alternate. Lys-54 is subject to N6-succinyllysine; alternate. Lys-57 carries the post-translational modification N6-acetyllysine.

This sequence belongs to the ATPase protein 8 family. As to quaternary structure, component of the ATP synthase complex composed at least of ATP5F1A/subunit alpha, ATP5F1B/subunit beta, ATP5MC1/subunit c (homooctomer), MT-ATP6/subunit a, MT-ATP8/subunit 8, ATP5ME/subunit e, ATP5MF/subunit f, ATP5MG/subunit g, ATP5MK/subunit k, ATP5MJ/subunit j, ATP5F1C/subunit gamma, ATP5F1D/subunit delta, ATP5F1E/subunit epsilon, ATP5PF/subunit F6, ATP5PB/subunit b, ATP5PD/subunit d, ATP5PO/subunit OSCP. ATP synthase complex consists of a soluble F(1) head domain (subunits alpha(3) and beta(3)) - the catalytic core - and a membrane F(0) domain - the membrane proton channel (subunits c, a, 8, e, f, g, k and j). These two domains are linked by a central stalk (subunits gamma, delta, and epsilon) rotating inside the F1 region and a stationary peripheral stalk (subunits F6, b, d, and OSCP). Interacts with PRICKLE3.

Its subcellular location is the mitochondrion membrane. Its function is as follows. Subunit 8, of the mitochondrial membrane ATP synthase complex (F(1)F(0) ATP synthase or Complex V) that produces ATP from ADP in the presence of a proton gradient across the membrane which is generated by electron transport complexes of the respiratory chain. ATP synthase complex consist of a soluble F(1) head domain - the catalytic core - and a membrane F(1) domain - the membrane proton channel. These two domains are linked by a central stalk rotating inside the F(1) region and a stationary peripheral stalk. During catalysis, ATP synthesis in the catalytic domain of F(1) is coupled via a rotary mechanism of the central stalk subunits to proton translocation. In vivo, can only synthesize ATP although its ATP hydrolase activity can be activated artificially in vitro. Part of the complex F(0) domain. The sequence is that of ATP synthase F(0) complex subunit 8 from Lemur catta (Ring-tailed lemur).